The chain runs to 286 residues: Probable ketoamine kinase YniA (286 aa).

91–93 (DYL) is a binding site for ATP. The active-site Proton acceptor is aspartate 193.

This sequence belongs to the fructosamine kinase family.

Ketoamine kinase that phosphorylates ketoamines on the third carbon of the sugar moiety to generate ketoamine 3-phosphate. This chain is Probable ketoamine kinase YniA (yniA), found in Escherichia coli O157:H7.